The primary structure comprises 350 residues: Ion-translocating oxidoreductase complex subunit D (350 aa).

3 helical membrane passes run 25-45, 89-109, and 129-149; these read ILCA…GTVI, IPPL…IVIV, and VMLL…SVIA. T185 bears the FMN phosphoryl threonine mark. A run of 5 helical transmembrane segments spans residues 212–232, 239–259, 264–284, 298–318, and 319–339; these read GFGV…LVML, WHIT…GYLL, FTGP…FFIA, LVFG…GGYP, and DAFA…DHYM.

Belongs to the NqrB/RnfD family. In terms of assembly, the complex is composed of six subunits: RnfA, RnfB, RnfC, RnfD, RnfE and RnfG. FMN is required as a cofactor.

The protein localises to the cell inner membrane. Part of a membrane-bound complex that couples electron transfer with translocation of ions across the membrane. In Shewanella sediminis (strain HAW-EB3), this protein is Ion-translocating oxidoreductase complex subunit D.